Consider the following 2382-residue polypeptide: Highly reducing polyketide synthase srdA (2382 aa).

Positions 1-25 are disordered; the sequence is MAPHSTLDSDYSSGSSTPTSASAAG. Positions 44–474 constitute a Ketosynthase family 3 (KS3) domain; the sequence is QEPIAIIGMG…GANAHAILEA (431 aa). Residues Cys217, His352, and His390 each act as for beta-ketoacyl synthase activity in the active site. The malonyl-CoA:ACP transacylase (MAT) domain stretch occupies residues 580–891; it reads VFTGQGAQWP…HYGSALSRGK (312 aa). The active-site For malonyltransferase activity is the Ser672. An N-terminal hotdog fold region spans residues 971 to 1108; it reads HDLLGSQVHG…GLVKIDSAPA (138 aa). The dehydratase (DH) domain stretch occupies residues 971-1274; it reads HDLLGSQVHG…RQVSYQSGIQ (304 aa). One can recognise a PKS/mFAS DH domain in the interval 971–1275; that stretch reads HDLLGSQVHG…QVSYQSGIQQ (305 aa). The active-site Proton acceptor; for dehydratase activity is His1003. The tract at residues 1121-1275 is C-terminal hotdog fold; that stretch reads MEPQAPRTWY…QVSYQSGIQQ (155 aa). Asp1189 serves as the catalytic Proton donor; for dehydratase activity. The tract at residues 1668–1979 is enoyl reductase (ER) domain; the sequence is GQIDSIFFRR…AKGHSGSVVV (312 aa). The tract at residues 2004–2180 is ketoreductase (KR) domain; that stretch reads SYLLVGCLGG…ATSIGLGMIS (177 aa). The Carrier domain occupies 2298-2376; that stretch reads SVEDAVLKMI…LLSELITKKM (79 aa). At Ser2335 the chain carries O-(pantetheine 4'-phosphoryl)serine.

Highly reducing polyketide synthase; part of the gene cluster that mediates the biosynthesis of sordarial, a salicylic aldehyde structurally related to the phytotoxin pyriculol. The most interesting aspect of this pathway is formation of an aromatic product from the highly reducing polyketide synthase srdA. SrdA synthesizes a reduced polyketide chain from one molecule of acetyl-CoA and five molecules of malonyl-CoA. The polyketide chain is then reductively released as an aldehyde. The oxidoreductases srdC, srdD and srdE then oxidize one of the hydroxy groups to facilitate the intramolecular aldol condensation, followed by dehydration to yield a salicylic aldehyde. This aldehyde can undergo facile reduction by endogenous reductases to yield the alcohol 1-hydroxy-2-hydroxymethyl-3-pent-1,3-dienylbenzene. The flavin-dependent srdI counteract against the propensity of the aldehydes to be reduced under physiological conditions and is responsible for reoxidizing 1-hydroxy-2-hydroxymethyl-3-pent-1,3-dienylbenzene back to the salicylic aldehyde. This salicylic aldehyde is then selectively epoxidized by the cupin-domain-containing oxidoreductase srdB to yield the epoxide, which can be hydrolyzed stereoselectively by the hydrolase srdG to give the final product sordarial. The sequence is that of Highly reducing polyketide synthase srdA from Neurospora crassa (strain ATCC 24698 / 74-OR23-1A / CBS 708.71 / DSM 1257 / FGSC 987).